The sequence spans 602 residues: Alpha-(1-&gt;6)-mannopyranosyltransferase B (602 aa).

Helical transmembrane passes span 105-125, 148-168, 190-210, 244-264, 274-294, 320-340, 368-388, 404-424, 448-468, 472-492, 503-523, 546-566, and 571-591; these read IGTM…ALPV, MIVL…APLV, TFGA…QDIY, VPFI…SIAA, IVGG…AAGW, LILH…FLLV, GVLI…LGFV, VVAI…TVVV, WMSM…NLGL, TAAM…AFMV, IHAV…FPVV, LGVI…GLAL, and VFSI…VGWW.

It belongs to the MptA/B family.

The protein localises to the membrane. It participates in cell wall biogenesis; cell wall polysaccharide biosynthesis. Involved in the initiation of core alpha-(1-&gt;6) mannan biosynthesis of lipomannan (LM-A) and multi-mannosylated polymer (LM-B), extending triacylatedphosphatidyl-myo-inositol dimannoside (Ac1PIM2) and mannosylated glycolipid, 1,2-di-O-C16/C18:1-(alpha-D-mannopyranosyl)-(1-&gt;4)-(alpha-D-glucopyranosyluronic acid)-(1-&gt;3)-glycerol (Man1GlcAGroAc2), respectively. Catalyzes the addition of alpha-(1-&gt;6)-mannose residue. In Corynebacterium glutamicum (strain ATCC 13032 / DSM 20300 / JCM 1318 / BCRC 11384 / CCUG 27702 / LMG 3730 / NBRC 12168 / NCIMB 10025 / NRRL B-2784 / 534), this protein is Alpha-(1-&gt;6)-mannopyranosyltransferase B (mptB).